A 440-amino-acid polypeptide reads, in one-letter code: Polyprenol-phosphate-mannose-dependent alpha-(1-2)-phosphatidylinositol mannoside mannosyltransferase (440 aa).

Helical transmembrane passes span 15–35, 87–107, 109–129, 144–161, 164–184, 193–213, 224–244, 281–301, 316–336, 360–380, and 395–415; these read LAPT…VLWV, LAAI…SSAI, ATTL…LDVW, AWLA…LEPI, NFEF…DCVP, LLLG…LYFL, TAAT…SDSV, PRFI…VWAA, APVL…PVSW, VWFT…PITL, and LAGG…GLVS. Positions 419 to 440 are disordered; it reads THTGDAHETDEPLVPLARGEAG.

It belongs to the glycosyltransferase 87 family.

It is found in the cell membrane. It functions in the pathway phospholipid metabolism; phosphatidylinositol metabolism. Functionally, responsible for the addition of alpha-(1-2) mannose branches to the linear mannan core on the biosynthetic pathway to mature Lipoarabinomannan (LAM). The protein is Polyprenol-phosphate-mannose-dependent alpha-(1-2)-phosphatidylinositol mannoside mannosyltransferase of Mycolicibacterium smegmatis (strain ATCC 700084 / mc(2)155) (Mycobacterium smegmatis).